A 620-amino-acid polypeptide reads, in one-letter code: Probable potassium transport system protein Kup (620 aa).

12 helical membrane-spanning segments follow: residues 11–31, 51–71, 100–120, 138–158, 167–187, 202–222, 246–266, 288–308, 334–354, 364–384, 396–416, and 418–438; these read LAFLAMGIVYGDIGTSPLYAF, ILSLVFWAFVLIVSIKYLLLV, IAMLLGILATGFFFGEAVITP, LAPYVLPIAMMIIVALFAVQA, FFAPVMLLWFLVLALLGAHAI, AVHFVLLHGQHTLFILGLVVL, WFALVMPSLLLNYFGQGAYLL, LILLATFATVIASQAVISGIF, GQIYVPAANMLLFVAVIFVML, AAYGIAVTAIMMISSLLLVLV, VVTIGIAFIGMDTLLLASTST, and LMEGGWLPLLLGCVVFIVMYI.

Belongs to the HAK/KUP transporter (TC 2.A.72) family.

Its subcellular location is the cell inner membrane. The catalysed reaction is K(+)(in) + H(+)(in) = K(+)(out) + H(+)(out). Functionally, transport of potassium into the cell. Likely operates as a K(+):H(+) symporter. This is Probable potassium transport system protein Kup from Vibrio cholerae serotype O1 (strain ATCC 39541 / Classical Ogawa 395 / O395).